Reading from the N-terminus, the 222-residue chain is 2-C-methyl-D-erythritol 4-phosphate cytidylyltransferase (222 aa).

It belongs to the IspD/TarI cytidylyltransferase family. IspD subfamily.

It catalyses the reaction 2-C-methyl-D-erythritol 4-phosphate + CTP + H(+) = 4-CDP-2-C-methyl-D-erythritol + diphosphate. It functions in the pathway isoprenoid biosynthesis; isopentenyl diphosphate biosynthesis via DXP pathway; isopentenyl diphosphate from 1-deoxy-D-xylulose 5-phosphate: step 2/6. Functionally, catalyzes the formation of 4-diphosphocytidyl-2-C-methyl-D-erythritol from CTP and 2-C-methyl-D-erythritol 4-phosphate (MEP). The polypeptide is 2-C-methyl-D-erythritol 4-phosphate cytidylyltransferase (Thermotoga neapolitana (strain ATCC 49049 / DSM 4359 / NBRC 107923 / NS-E)).